The primary structure comprises 287 residues: Pentatricopeptide repeat-containing protein At4g18975, chloroplastic (287 aa).

Residues 1 to 34 (MALCNLNPTQGIFPLQGLSKSQEFICFSLLQSPR) constitute a chloroplast transit peptide. PPR repeat units lie at residues 165–199 (TMGTYDILLLAFDMDERADEAESLWNMILHTHTRS) and 201–235 (PRRLFARMIALYAHHDLHDKVIEVFADMEELKVSP).

It belongs to the PPR family. P subfamily.

The protein localises to the plastid. It is found in the chloroplast. The polypeptide is Pentatricopeptide repeat-containing protein At4g18975, chloroplastic (Arabidopsis thaliana (Mouse-ear cress)).